The primary structure comprises 50 residues: Sperm protamine P1 (50 aa).

2 disulfide bridges follow: Cys7–Cys15 and Cys38–Cys46.

It belongs to the protamine P1 family. Cross-linked by interchain disulfide bonds around the DNA-helix. As to expression, testis.

The protein resides in the nucleus. The protein localises to the chromosome. Its function is as follows. Protamines substitute for histones in the chromatin of sperm during the haploid phase of spermatogenesis. They compact sperm DNA into a highly condensed, stable and inactive complex. The chain is Sperm protamine P1 (PRM1) from Equus asinus (Donkey).